We begin with the raw amino-acid sequence, 956 residues long: Glutamate receptor ionotropic, kainate 4 (956 aa).

The N-terminal stretch at 1-20 is a signal peptide; the sequence is MPRVSAPLVLLPAWLLMVAC. Topologically, residues 21-545 are extracellular; the sequence is SPHSLRIAAI…YFSFLDPFSP (525 aa). N-linked (GlcNAc...) asparagine glycans are attached at residues asparagine 158, asparagine 220, asparagine 272, asparagine 286, asparagine 323, asparagine 408, asparagine 415, and asparagine 479. Glycine 500, threonine 502, and arginine 507 together coordinate L-glutamate. A helical transmembrane segment spans residues 546–566; it reads GVWLFMLLAYLAVSCVLFLVA. At 567-623 the chain is on the cytoplasmic side; that stretch reads RLTPYEWYSPHPCAQGRCNLLVNQYSLGNSLWFPVGGFMQQGSTIAPRALSTRCVSG. Residues 624-644 form a helical membrane-spanning segment; the sequence is VWWAFTLIIISSYTANLAAFL. At 645-804 the chain is on the extracellular side; it reads TVQRMEVPIE…HRAKGLGMEN (160 aa). Serine 674, serine 675, and glutamate 723 together coordinate L-glutamate. Asparagine 736 carries an N-linked (GlcNAc...) asparagine glycan. A helical transmembrane segment spans residues 805–825; the sequence is IGGIFVVLICGLIVAIFMAML. Residues 826–956 are Cytoplasmic-facing; it reads EFLWTLRHSE…DKTTNSSEPE (131 aa). The tract at residues 931–956 is disordered; the sequence is LRARPSPARSEESLEWDKTTNSSEPE. Residues 939–948 show a composition bias toward basic and acidic residues; that stretch reads RSEESLEWDK.

This sequence belongs to the glutamate-gated ion channel (TC 1.A.10.1) family. GRIK4 subfamily. Homodimer. Can form functional heteromeric receptors with GRIK1, GRIK2 and GRIK3 subunits. Forms a heteromeric complex with GRIK2. As to expression, expressed in the hippocampus and cerebellum (at protein level).

The protein localises to the cell membrane. The protein resides in the postsynaptic cell membrane. Its subcellular location is the presynaptic cell membrane. Ionotropic glutamate receptor that functions as a cation-permeable ligand-gated ion channel. Cannot form functional channels on its own and produces channel activity only in heteromeric assembly with GRIK1, GRIK2 and GRIK3 subunits. This Mus musculus (Mouse) protein is Glutamate receptor ionotropic, kainate 4 (Grik4).